Consider the following 248-residue polypeptide: 1-(5-phosphoribosyl)-5-[(5-phosphoribosylamino)methylideneamino] imidazole-4-carboxamide isomerase (248 aa).

Residue D8 is the Proton acceptor of the active site. Residue D131 is the Proton donor of the active site.

It belongs to the HisA/HisF family.

It is found in the cytoplasm. The enzyme catalyses 1-(5-phospho-beta-D-ribosyl)-5-[(5-phospho-beta-D-ribosylamino)methylideneamino]imidazole-4-carboxamide = 5-[(5-phospho-1-deoxy-D-ribulos-1-ylimino)methylamino]-1-(5-phospho-beta-D-ribosyl)imidazole-4-carboxamide. The protein operates within amino-acid biosynthesis; L-histidine biosynthesis; L-histidine from 5-phospho-alpha-D-ribose 1-diphosphate: step 4/9. In Nitrosomonas eutropha (strain DSM 101675 / C91 / Nm57), this protein is 1-(5-phosphoribosyl)-5-[(5-phosphoribosylamino)methylideneamino] imidazole-4-carboxamide isomerase.